Reading from the N-terminus, the 531-residue chain is tRNA(Ile)-lysidine synthase (531 aa).

Position 32-37 (32-37 (SGGMDS)) interacts with ATP.

The protein belongs to the tRNA(Ile)-lysidine synthase family.

The protein resides in the cytoplasm. The enzyme catalyses cytidine(34) in tRNA(Ile2) + L-lysine + ATP = lysidine(34) in tRNA(Ile2) + AMP + diphosphate + H(+). Its function is as follows. Ligates lysine onto the cytidine present at position 34 of the AUA codon-specific tRNA(Ile) that contains the anticodon CAU, in an ATP-dependent manner. Cytidine is converted to lysidine, thus changing the amino acid specificity of the tRNA from methionine to isoleucine. This is tRNA(Ile)-lysidine synthase from Blochmanniella floridana.